A 459-amino-acid polypeptide reads, in one-letter code: Cysteine--tRNA ligase (459 aa).

Residue Cys-28 coordinates Zn(2+). A 'HIGH' region motif is present at residues 30-40 (VTIYDLCHIGH). Residues Cys-209, His-234, and Glu-238 each coordinate Zn(2+). The 'KMSKS' region signature appears at 266-270 (KMSKS). Lys-269 lines the ATP pocket.

This sequence belongs to the class-I aminoacyl-tRNA synthetase family. In terms of assembly, monomer. Zn(2+) is required as a cofactor.

The protein localises to the cytoplasm. The catalysed reaction is tRNA(Cys) + L-cysteine + ATP = L-cysteinyl-tRNA(Cys) + AMP + diphosphate. This Shewanella loihica (strain ATCC BAA-1088 / PV-4) protein is Cysteine--tRNA ligase.